A 55-amino-acid polypeptide reads, in one-letter code: Large ribosomal subunit protein bL33B (55 aa).

Belongs to the bacterial ribosomal protein bL33 family.

This is Large ribosomal subunit protein bL33B (rpmG2) from Mycobacterium tuberculosis (strain CDC 1551 / Oshkosh).